A 556-amino-acid chain; its full sequence is Formate--tetrahydrofolate ligase 1 (556 aa).

65 to 72 (TPAGEGKS) lines the ATP pocket.

It belongs to the formate--tetrahydrofolate ligase family.

It catalyses the reaction (6S)-5,6,7,8-tetrahydrofolate + formate + ATP = (6R)-10-formyltetrahydrofolate + ADP + phosphate. Its pathway is one-carbon metabolism; tetrahydrofolate interconversion. The chain is Formate--tetrahydrofolate ligase 1 from Streptococcus pyogenes serotype M1.